Here is a 253-residue protein sequence, read N- to C-terminus: 5'/3'-nucleotidase SurE (253 aa).

4 residues coordinate a divalent metal cation: Asp-8, Asp-9, Ser-39, and Asn-92.

It belongs to the SurE nucleotidase family. The cofactor is a divalent metal cation.

Its subcellular location is the cytoplasm. The catalysed reaction is a ribonucleoside 5'-phosphate + H2O = a ribonucleoside + phosphate. It carries out the reaction a ribonucleoside 3'-phosphate + H2O = a ribonucleoside + phosphate. It catalyses the reaction [phosphate](n) + H2O = [phosphate](n-1) + phosphate + H(+). In terms of biological role, nucleotidase with a broad substrate specificity as it can dephosphorylate various ribo- and deoxyribonucleoside 5'-monophosphates and ribonucleoside 3'-monophosphates with highest affinity to 3'-AMP. Also hydrolyzes polyphosphate (exopolyphosphatase activity) with the preference for short-chain-length substrates (P20-25). Might be involved in the regulation of dNTP and NTP pools, and in the turnover of 3'-mononucleotides produced by numerous intracellular RNases (T1, T2, and F) during the degradation of various RNAs. This is 5'/3'-nucleotidase SurE from Salmonella typhimurium (strain LT2 / SGSC1412 / ATCC 700720).